The following is a 127-amino-acid chain: Transcription antitermination protein NusB (127 aa).

It belongs to the NusB family.

Functionally, involved in transcription antitermination. Required for transcription of ribosomal RNA (rRNA) genes. Binds specifically to the boxA antiterminator sequence of the ribosomal RNA (rrn) operons. The sequence is that of Transcription antitermination protein NusB from Lysinibacillus sphaericus (strain C3-41).